The sequence spans 264 residues: Small ribosomal subunit protein eS1 (264 aa).

Residues 233 to 264 form a disordered region; that stretch reads GEGGGAGKPAGDETGAKVERADGYEPPVQESV. Over residues 242–255 the composition is skewed to basic and acidic residues; it reads AGDETGAKVERADG.

The protein belongs to the eukaryotic ribosomal protein eS1 family. As to quaternary structure, component of the small ribosomal subunit. Mature ribosomes consist of a small (40S) and a large (60S) subunit. The 40S subunit contains about 33 different proteins and 1 molecule of RNA (18S). The 60S subunit contains about 49 different proteins and 3 molecules of RNA (28S, 5.8S and 5S). Part of the small subunit (SSU) processome, composed of more than 70 proteins and the RNA chaperone small nucleolar RNA (snoRNA) U3.

It is found in the cytoplasm. Its subcellular location is the nucleus. It localises to the nucleolus. In terms of biological role, component of the small ribosomal subunit. The ribosome is a large ribonucleoprotein complex responsible for the synthesis of proteins in the cell. Part of the small subunit (SSU) processome, first precursor of the small eukaryotic ribosomal subunit. During the assembly of the SSU processome in the nucleolus, many ribosome biogenesis factors, an RNA chaperone and ribosomal proteins associate with the nascent pre-rRNA and work in concert to generate RNA folding, modifications, rearrangements and cleavage as well as targeted degradation of pre-ribosomal RNA by the RNA exosome. May play a role during erythropoiesis. The sequence is that of Small ribosomal subunit protein eS1 (rps3a) from Xenopus tropicalis (Western clawed frog).